A 117-amino-acid polypeptide reads, in one-letter code: Hydrogenase maturation factor HypA (117 aa).

Histidine 2 contributes to the Ni(2+) binding site. Residues cysteine 74, cysteine 77, cysteine 91, and cysteine 94 each contribute to the Zn(2+) site.

The protein belongs to the HypA/HybF family.

In terms of biological role, involved in the maturation of [NiFe] hydrogenases. Required for nickel insertion into the metal center of the hydrogenase. The chain is Hydrogenase maturation factor HypA from Helicobacter pylori (strain J99 / ATCC 700824) (Campylobacter pylori J99).